We begin with the raw amino-acid sequence, 443 residues long: Tubulin beta-3 chain (443 aa).

GTP is bound by residues glutamine 11, glutamate 69, serine 138, glycine 142, threonine 143, glycine 144, asparagine 204, and asparagine 226. Mg(2+) is bound at residue glutamate 69.

It belongs to the tubulin family. In terms of assembly, dimer of alpha and beta chains. A typical microtubule is a hollow water-filled tube with an outer diameter of 25 nm and an inner diameter of 15 nM. Alpha-beta heterodimers associate head-to-tail to form protofilaments running lengthwise along the microtubule wall with the beta-tubulin subunit facing the microtubule plus end conferring a structural polarity. Microtubules usually have 13 protofilaments but different protofilament numbers can be found in some organisms and specialized cells. Mg(2+) is required as a cofactor.

The protein resides in the cytoplasm. It is found in the cytoskeleton. Tubulin is the major constituent of microtubules, a cylinder consisting of laterally associated linear protofilaments composed of alpha- and beta-tubulin heterodimers. Microtubules grow by the addition of GTP-tubulin dimers to the microtubule end, where a stabilizing cap forms. Below the cap, tubulin dimers are in GDP-bound state, owing to GTPase activity of alpha-tubulin. This is Tubulin beta-3 chain (TUB-3) from Echinococcus multilocularis (Fox tapeworm).